A 159-amino-acid polypeptide reads, in one-letter code: NAD(P)H-quinone oxidoreductase subunit J, chloroplastic (159 aa).

The protein belongs to the complex I 30 kDa subunit family. In terms of assembly, NDH is composed of at least 16 different subunits, 5 of which are encoded in the nucleus. In terms of tissue distribution, leaves.

The protein resides in the plastid. It localises to the chloroplast thylakoid membrane. It catalyses the reaction a plastoquinone + NADH + (n+1) H(+)(in) = a plastoquinol + NAD(+) + n H(+)(out). It carries out the reaction a plastoquinone + NADPH + (n+1) H(+)(in) = a plastoquinol + NADP(+) + n H(+)(out). In terms of biological role, NDH shuttles electrons from NAD(P)H:plastoquinone, via FMN and iron-sulfur (Fe-S) centers, to quinones in the photosynthetic chain and possibly in a chloroplast respiratory chain. The immediate electron acceptor for the enzyme in this species is believed to be plastoquinone. Couples the redox reaction to proton translocation, and thus conserves the redox energy in a proton gradient. In Zea mays (Maize), this protein is NAD(P)H-quinone oxidoreductase subunit J, chloroplastic.